Consider the following 712-residue polypeptide: 3',5'-cyclic-AMP phosphodiesterase 4C (712 aa).

Disordered regions lie at residues 1-31 and 45-64; these read MENL…APKH and RFYS…LSPR. Residues 17 to 31 show a composition bias toward basic residues; it reads SRSRGRHSMTRAPKH. Over residues 48–64 the composition is skewed to basic and acidic residues; it reads SDPDKSAGCRERDLSPR. The residue at position 73 (Ser-73) is a Phosphoserine. A disordered region spans residues 181–200; it reads AKQGPVGNPSSSNQLPPAED. Positions 312 to 641 constitute a PDEase domain; it reads VQTDQEEQLA…EWYQSKIPRS (330 aa). Residue His-388 is the Proton donor of the active site. His-388 is a binding site for 3',5'-cyclic AMP. AMP contacts are provided by His-388 and His-392. Zn(2+) is bound by residues His-392, His-428, Asp-429, and Asp-546. Residues Asp-429, Asp-546, Gln-597, and Phe-600 each contribute to the AMP site. Position 429 (Asp-429) interacts with Mg(2+). Mn(2+) is bound at residue Asp-429. 2 residues coordinate 3',5'-cyclic AMP: Gln-597 and Phe-600. 2 disordered regions span residues 636-655 and 664-712; these read SKIP…GPDR and EAEE…NQRT. Ser-641 carries the post-translational modification Phosphoserine. Residues 664-678 are compositionally biased toward acidic residues; it reads EAEEEDEEEEEEGEE.

Belongs to the cyclic nucleotide phosphodiesterase family. PDE4 subfamily. As to quaternary structure, part of a complex containing AKAP5, ADCY5, ADCY6 and PKD2. Requires Zn(2+) as cofactor. The cofactor is Mg(2+). Mn(2+) serves as cofactor. As to expression, expressed in various tissues but not in cells of the immune system.

The protein localises to the cell projection. The protein resides in the cilium. It carries out the reaction 3',5'-cyclic AMP + H2O = AMP + H(+). It participates in purine metabolism; 3',5'-cyclic AMP degradation; AMP from 3',5'-cyclic AMP: step 1/1. Inhibited by rolipram. Functionally, hydrolyzes the second messenger cAMP, which is a key regulator of many important physiological processes. This chain is 3',5'-cyclic-AMP phosphodiesterase 4C, found in Homo sapiens (Human).